The chain runs to 92 residues: Small ribosomal subunit protein bS18 (92 aa).

Belongs to the bacterial ribosomal protein bS18 family. Part of the 30S ribosomal subunit. Forms a tight heterodimer with protein bS6.

In terms of biological role, binds as a heterodimer with protein bS6 to the central domain of the 16S rRNA, where it helps stabilize the platform of the 30S subunit. The polypeptide is Small ribosomal subunit protein bS18 (Cupriavidus taiwanensis (strain DSM 17343 / BCRC 17206 / CCUG 44338 / CIP 107171 / LMG 19424 / R1) (Ralstonia taiwanensis (strain LMG 19424))).